Here is a 472-residue protein sequence, read N- to C-terminus: Keratin, type I cytoskeletal 14 (472 aa).

A head region spans residues 1–114; sequence MTTCSRQFTS…AGGDGLLVGS (114 aa). A coil 1A region spans residues 115 to 150; the sequence is EKVTMQNLNDRLASYLDKVRALEEANADLEVKIRDW. Residues 115-426 enclose the IF rod domain; it reads EKVTMQNLND…RLLEGEDAHL (312 aa). Residues 151-168 are linker 1; that stretch reads YQRQRPAEIKDYSPYFKT. The segment at 169–260 is coil 1B; that stretch reads IEDLRNKILT…KNHEEEMNAL (92 aa). A linker 12 region spans residues 261–283; that stretch reads RGQVGGDVNVEMDAAPGVDLSRI. A coil 2 region spans residues 284-422; it reads LNEMRDQYEK…ATYRRLLEGE (139 aa). The tail stretch occupies residues 423–472; that stretch reads DAHLSSSQFSSGSQSSRDVTSSSRQIRTKVMDVHDGKVVSTHEQVLRTKN. An interaction with Type I keratins and keratin filaments region spans residues 425 to 472; that stretch reads HLSSSQFSSGSQSSRDVTSSSRQIRTKVMDVHDGKVVSTHEQVLRTKN. Residues 426 to 472 form a disordered region; it reads LSSSQFSSGSQSSRDVTSSSRQIRTKVMDVHDGKVVSTHEQVLRTKN. Low complexity predominate over residues 427–445; sequence SSSQFSSGSQSSRDVTSSS. S435 is subject to Phosphoserine.

This sequence belongs to the intermediate filament family. Heterotetramer of two type I and two type II keratins. Forms a disulfide-linked heterodimer (via 2B domains) with KRT5 (via 2B domains). Forms a heterodimer with KRT1; the interaction is more abundant in the absence of KRT5. Interacts with PLEC isoform 1C, when in a heterodimer with KRT5. Interacts with TRADD and with keratin filaments. Associates with other type I keratins. Interacts with EPPK1. Interacts with KLHL24. Interacts with PKP1 (via N-terminus) and PKP2. A disulfide bond is formed between rather than within filaments and promotes the formation of a keratin filament cage around the nucleus. In terms of processing, ubiquitinated by the BCR(KLHL24) E3 ubiquitin ligase complex. As to expression, expressed in the corneal epithelium (at protein level). Detected in the basal layer, lowered within the more apically located layers specifically in the stratum spinosum, stratum granulosum but is not detected in stratum corneum. Strongly expressed in the outer root sheath of anagen follicles but not in the germinative matrix, inner root sheath or hair. Found in keratinocytes surrounding the club hair during telogen.

Its subcellular location is the cytoplasm. It localises to the nucleus. In terms of biological role, the nonhelical tail domain is involved in promoting KRT5-KRT14 filaments to self-organize into large bundles and enhances the mechanical properties involved in resilience of keratin intermediate filaments in vitro. The polypeptide is Keratin, type I cytoskeletal 14 (KRT14) (Homo sapiens (Human)).